We begin with the raw amino-acid sequence, 525 residues long: Arabinose import ATP-binding protein AraG 2 (525 aa).

Residues 1–25 (MTDTTIRARGAQAAGSPAGAGPLDA) form a disordered region. A compositionally biased stretch (low complexity) spans 7–25 (RARGAQAAGSPAGAGPLDA). ABC transporter domains follow at residues 35–270 (LELD…MVGR) and 281–524 (REPG…LALP). 67–74 (GENGAGKS) lines the ATP pocket.

The protein belongs to the ABC transporter superfamily. Arabinose importer (TC 3.A.1.2.2) family. The complex is composed of two ATP-binding proteins (AraG), two transmembrane proteins (AraH) and a solute-binding protein (AraF).

The protein resides in the cell inner membrane. The catalysed reaction is L-arabinose(out) + ATP + H2O = L-arabinose(in) + ADP + phosphate + H(+). Part of the ABC transporter complex AraFGH involved in arabinose import. Responsible for energy coupling to the transport system. This Burkholderia thailandensis (strain ATCC 700388 / DSM 13276 / CCUG 48851 / CIP 106301 / E264) protein is Arabinose import ATP-binding protein AraG 2.